The following is a 250-amino-acid chain: Ribonuclease 3 (250 aa).

The span at 1-15 (MTKTPAKKKRARSSK) shows a compositional bias: basic residues. The disordered stretch occupies residues 1-21 (MTKTPAKKKRARSSKAKGTDA). The region spanning 22-150 (NAALEARIGH…VIGAIFLDGG (129 aa)) is the RNase III domain. Glu-63 serves as a coordination point for Mg(2+). Asp-67 is a catalytic residue. Positions 136 and 139 each coordinate Mg(2+). The active site involves Glu-139. A DRBM domain is found at 175–244 (DPKTVLQEWA…ASVMIEREGV (70 aa)).

This sequence belongs to the ribonuclease III family. Homodimer. The cofactor is Mg(2+).

The protein localises to the cytoplasm. It carries out the reaction Endonucleolytic cleavage to 5'-phosphomonoester.. Functionally, digests double-stranded RNA. Involved in the processing of primary rRNA transcript to yield the immediate precursors to the large and small rRNAs (23S and 16S). Processes some mRNAs, and tRNAs when they are encoded in the rRNA operon. Processes pre-crRNA and tracrRNA of type II CRISPR loci if present in the organism. In Bradyrhizobium diazoefficiens (strain JCM 10833 / BCRC 13528 / IAM 13628 / NBRC 14792 / USDA 110), this protein is Ribonuclease 3.